The following is a 727-amino-acid chain: Elongation factor 2 (727 aa).

The tr-type G domain occupies 19–260 (DQIRNMGICA…MAIKHLPNPL (242 aa)). Residues 28-35 (AHIDHGKT), 94-98 (DTPGH), and 148-151 (NKVD) each bind GTP. The residue at position 603 (His603) is a Diphthamide.

Belongs to the TRAFAC class translation factor GTPase superfamily. Classic translation factor GTPase family. EF-G/EF-2 subfamily.

The protein localises to the cytoplasm. In terms of biological role, catalyzes the GTP-dependent ribosomal translocation step during translation elongation. During this step, the ribosome changes from the pre-translocational (PRE) to the post-translocational (POST) state as the newly formed A-site-bound peptidyl-tRNA and P-site-bound deacylated tRNA move to the P and E sites, respectively. Catalyzes the coordinated movement of the two tRNA molecules, the mRNA and conformational changes in the ribosome. This is Elongation factor 2 from Methanococcus maripaludis (strain C7 / ATCC BAA-1331).